Reading from the N-terminus, the 427-residue chain is A-adding tRNA nucleotidyltransferase (427 aa).

49 to 52 (GTVR) is an ATP binding site. Mg(2+)-binding residues include Asp62 and Asp64. ATP contacts are provided by residues 136–137 (RD), Asn141, 181–190 (DPTRLLRGVR), Arg194, and Arg225.

It belongs to the tRNA nucleotidyltransferase/poly(A) polymerase family. It depends on Mg(2+) as a cofactor.

It carries out the reaction a tRNA with a 3' CC end + ATP = a tRNA with a 3' CCA end + diphosphate. Its function is as follows. tRNA nucleotidyltransferase involved in the synthesis of the tRNA CCA terminus. Adds the terminal adenosine residue to tRNA. This is A-adding tRNA nucleotidyltransferase from Halalkalibacterium halodurans (strain ATCC BAA-125 / DSM 18197 / FERM 7344 / JCM 9153 / C-125) (Bacillus halodurans).